The following is a 176-amino-acid chain: dCTP deaminase (176 aa).

Residues 99 to 104 (RSTLAR) and D115 contribute to the dCTP site. The Proton donor/acceptor role is filled by E125. DCTP is bound at residue Q163.

This sequence belongs to the dCTP deaminase family. Homotrimer.

It catalyses the reaction dCTP + H2O + H(+) = dUTP + NH4(+). The protein operates within pyrimidine metabolism; dUMP biosynthesis; dUMP from dCTP (dUTP route): step 1/2. Catalyzes the deamination of dCTP to dUTP. In Pyrobaculum neutrophilum (strain DSM 2338 / JCM 9278 / NBRC 100436 / V24Sta) (Thermoproteus neutrophilus), this protein is dCTP deaminase.